We begin with the raw amino-acid sequence, 237 residues long: Transcriptional regulatory protein YvrH (237 aa).

One can recognise a Response regulatory domain in the interval 5-119 (SILIVDDEKA…ELAARIRAHL (115 aa)). Asp55 is subject to 4-aspartylphosphate. The segment at residues 131–230 (NQTYTYDYFT…VRGLGYRFIP (100 aa)) is a DNA-binding region (ompR/PhoB-type).

Post-translationally, phosphorylated by YvrG.

It localises to the cytoplasm. Functionally, member of the two-component regulatory system YvrG/YvrH that positively regulates 7 transcriptional units (wprA, wapA-yxxG, dltABCDE, sunA, sunT-bdbA-yolJ-bdbB, sigO-rsoA, and sigX-rsiX), and negatively regulates the lytABC operon. This is Transcriptional regulatory protein YvrH (yvrH) from Bacillus subtilis (strain 168).